The primary structure comprises 496 residues: MGFFSSTQPPRPATVPSDEIIPLHFWNTALCMRGTVLDISLKFDDVLDTSKLRSALEELLEMKDWRQLGARLRMNPNGRLEYHIPTRFDASRPAFAMTNAQHETSIADHPLGARIPHATSTPAIFPSPDVLSPLLRSEDAPKNIDDWICSDRPQLSIHIITFSDATLITVTWLHTLTDVMGMALILNAWTALLRGNREAVPKLQGFRLDPLTELGQRTPAEKYMHFNRVFGRKEFWWFIGLNVLDRLWYRQEERRTICIPAASLRNLCQQSSSEICASRGKEEPVPFVSESDVLLGWWVRSLYSALGLRTDQTILVNNALNLRTSLHESFTSNNSAYMGNALCMSPTFLRGHQVADEPLGQIALRIRESVTEQRTPEQVEAMTALQMQTMEQTGYLALVGDPRMMLLSCSNWHKARLFDIDFSSAVLQSSGPSSLQNPQHTGKPCYVNGVQHSANSFRNVLSVIGKDAGGNWWLTGVLRTDAWTHIEKQLHKLGSS.

Active-site proton acceptor residues include H174 and D421.

It belongs to the plant acyltransferase family. As to quaternary structure, monomer.

It participates in secondary metabolite biosynthesis; terpenoid biosynthesis. In terms of biological role, acetyltransferase; part of the gene cluster that mediates the biosynthesis of andrastins, meroterpenoid compounds that exhibit inhibitory activity against ras farnesyltransferase, suggesting that they could be promising leads for antitumor agents. The first step of the pathway is the synthesis of 3,5-dimethylorsellinic acid (DMOA) by the polyketide synthase adrD via condensation of one acetyl-CoA starter unit with 3 malonyl-CoA units and 2 methylations. DMAO is then converted to farnesyl-DMAO by the prenyltransferase adrG. The methyltransferase adrK catalyzes the methylation of the carboxyl group of farnesyl-DMAO to farnesyl-DMAO methyl ester which is further converted to epoxyfarnesyl-DMAO methyl ester by the FAD-dependent monooxygenase adrH. The terpene cyclase adrI then catalyzes the carbon skeletal rearrangement to generate the andrastin E, the first compound in the pathway having the andrastin scaffold, with the tetracyclic ring system. The post-cyclization tailoring enzymes adrF, adrE, adrJ, and adrA, are involved in the conversion of andrastin E into andrastin A. The short chain dehydrogenase adrF is responsible for the oxidation of the C-3 a hydroxyl group of andrastin E to yield the corresponding ketone, andrastin D. The ketoreductase adrE stereoselectively reduces the carbonyl moiety to reverse the stereochemistry of the C-3 position to yield andrastin F. The acetyltransferase adrJ is the acetyltransferase that attaches the acetyl group to the C-3 hydroxyl group of andrastin F to yield andrastin C. Finally, the cytochrome P450 monooxygenase adrA catalyzes two sequential oxidation reactions of the C-23 methyl group, to generate the corresponding alcohol andrastin B, and aldehyde andrastin A. The protein is Acetyltransferase adrJ of Penicillium roqueforti.